Here is a 269-residue protein sequence, read N- to C-terminus: RBPJ-interacting and tubulin-associated protein 1 (269 aa).

Positions 5 to 17 (VELAISGMQTLHV) match the Nuclear export signal motif. 2 disordered regions span residues 67–94 (GTGV…TLTP) and 145–269 (PATP…PPWK). Residues 79 to 93 (SCESTSSSGSTPTLT) are compositionally biased toward low complexity. A Nuclear localization signal motif is present at residues 92–108 (LTPRKKNKYRLISHTPS). Positions 128–156 (WMARGDAAKLHALFWTPPATPRGSHSPRP) are interaction with RBPJ/RBPSUH. Positions 156–269 (PRETPVRCVH…ATQKTKPPWK (114 aa)) are interaction with tubulin. Composition is skewed to polar residues over residues 202–220 (LTHP…SPCT) and 247–269 (VSVS…PPWK).

It belongs to the RITA family. Interacts with RBPJ/RBPSUH.

It is found in the cytoplasm. It localises to the nucleus. The protein localises to the cytoskeleton. The protein resides in the microtubule organizing center. Its subcellular location is the centrosome. In terms of biological role, tubulin-binding protein that acts as a negative regulator of Notch signaling pathway. Shuttles between the cytoplasm and the nucleus and mediates the nuclear export of RBPJ/RBPSUH, thereby preventing the interaction between RBPJ/RBPSUH and NICD product of Notch proteins (Notch intracellular domain), leading to down-regulate Notch-mediated transcription. May play a role in neurogenesis. The chain is RBPJ-interacting and tubulin-associated protein 1 (RITA1) from Bos taurus (Bovine).